Consider the following 246-residue polypeptide: 3-deoxy-manno-octulosonate cytidylyltransferase (246 aa).

Belongs to the KdsB family.

The protein localises to the cytoplasm. The enzyme catalyses 3-deoxy-alpha-D-manno-oct-2-ulosonate + CTP = CMP-3-deoxy-beta-D-manno-octulosonate + diphosphate. Its pathway is nucleotide-sugar biosynthesis; CMP-3-deoxy-D-manno-octulosonate biosynthesis; CMP-3-deoxy-D-manno-octulosonate from 3-deoxy-D-manno-octulosonate and CTP: step 1/1. It functions in the pathway bacterial outer membrane biogenesis; lipopolysaccharide biosynthesis. In terms of biological role, activates KDO (a required 8-carbon sugar) for incorporation into bacterial lipopolysaccharide in Gram-negative bacteria. This chain is 3-deoxy-manno-octulosonate cytidylyltransferase, found in Rickettsia akari (strain Hartford).